Here is a 275-residue protein sequence, read N- to C-terminus: MPRWEEKNLIEEGKKLGYQVATIYSKDFVLFSNDFTIDNDTDLFIQRNVSHNRALITSFLVEQVGYPVINDHTTLIRCENKIFTTYILARHNIPTPKTFIAFDKTNAIEYSKKLGYPVVIKPVEGSWGRMVAKADNLDVLYSYLEYQEFSTQKYKDIYYIQEFVNKPNRDIRIFVIGDETPVGIYRVNENNWRTNTALGAKAYPLKIDEELRELALKVKDIIGGFFLGIDIFEDKDRGYLVDEVNGVPEYKNTVRVNNFNVSKFLLEKAAEWVKK.

ATP is bound by residues lysine 81, lysine 121, 125–131 (GSWGRMV), 161–172 (QEFVNKPNRDIR), arginine 186, and asparagine 195. One can recognise an ATP-grasp domain in the interval 85 to 270 (TYILARHNIP…VSKFLLEKAA (186 aa)). Mg(2+)-binding residues include aspartate 230, glutamate 243, and asparagine 245. Positions 252–253 (NT) match the N-[TS] motif that is essential for LysX substrate specificity motif.

It belongs to the RimK family. LysX subfamily. Homodimer. Mg(2+) is required as a cofactor.

It catalyses the reaction [amino-group carrier protein]-C-terminal-L-glutamate + L-2-aminoadipate + ATP = [amino-group carrier protein]-C-terminal-N-(1,4-dicarboxybutan-1-yl)-L-glutamine + ADP + phosphate + H(+). It participates in amino-acid biosynthesis; L-lysine biosynthesis via AAA pathway; L-lysine from L-alpha-aminoadipate (Thermus route): step 1/5. In terms of biological role, catalyzes the ATP-dependent formation of a covalent bond between the amino group of alpha-aminoadipate (AAA) and the gamma-carboxyl group of the C-terminal glutamate residue in LysW. In Saccharolobus solfataricus (strain ATCC 35092 / DSM 1617 / JCM 11322 / P2) (Sulfolobus solfataricus), this protein is Alpha-aminoadipate--LysW ligase LysX (lysX).